The primary structure comprises 264 residues: COP9 signalosome complex subunit 7b (264 aa).

Ala-2 bears the N-acetylalanine mark. Residues 2 to 159 (AGEQKPSSNL…QLLEVDFCIG (158 aa)) form the PCI domain. A coiled-coil region spans residues 188 to 237 (IEQQVLRANQYKENHNRTQQQVEAEVTNIKKTLKATASSSAQEMEQQLAE). Over residues 223–232 (TASSSAQEME) the composition is skewed to polar residues. Positions 223 to 264 (TASSSAQEMEQQLAERECPPHAEQRQPTKKMSKVKGLVSSRH) are disordered. The span at 235–248 (LAERECPPHAEQRQ) shows a compositional bias: basic and acidic residues. At Ser-261 the chain carries Phosphothreonine. Arg-263 carries the post-translational modification Phosphoserine.

It belongs to the CSN7/EIF3M family. CSN7 subfamily. As to quaternary structure, component of the CSN complex, composed of COPS1/GPS1, COPS2, COPS3, COPS4, COPS5, COPS6, COPS7 (COPS7A or COPS7B), COPS8 and COPS9 isoform 1. In the complex, it probably interacts directly with COPS1, COPS2, COPS4, COPS5, COPS6 and COPS8. Interacts with EIF3S6. (Microbial infection) Interacts with vaccinia virus protein C9L.

The protein localises to the cytoplasm. It is found in the nucleus. Functionally, component of the COP9 signalosome complex (CSN), a complex involved in various cellular and developmental processes. The CSN complex is an essential regulator of the ubiquitin (Ubl) conjugation pathway by mediating the deneddylation of the cullin subunits of SCF-type E3 ligase complexes, leading to decrease the Ubl ligase activity of SCF-type complexes such as SCF, CSA or DDB2. The complex is also involved in phosphorylation of p53/TP53, JUN, I-kappa-B-alpha/NFKBIA, ITPK1 and IRF8/ICSBP, possibly via its association with CK2 and PKD kinases. CSN-dependent phosphorylation of TP53 and JUN promotes and protects degradation by the Ubl system, respectively. This chain is COP9 signalosome complex subunit 7b (COPS7B), found in Homo sapiens (Human).